The following is a 233-amino-acid chain: 3,4-dihydroxy-2-butanone 4-phosphate synthase (233 aa).

Glu37 serves as a coordination point for Mg(2+). Glu37 contributes to the Mn(2+) binding site. Residue Asp41 participates in D-ribulose 5-phosphate binding. Cys66 carries the post-translational modification S-glutathionyl cysteine. D-ribulose 5-phosphate-binding positions include Thr92 and 150 to 154; that span reads RRGHT. Residue His153 coordinates Mg(2+). Residue His153 participates in Mn(2+) binding.

In terms of assembly, homodimer. Mg(2+) is required as a cofactor. Requires Mn(2+) as cofactor. S-glutathionylation is reversible and dependent on a glutaredoxin.

The enzyme catalyses D-ribulose 5-phosphate = (2S)-2-hydroxy-3-oxobutyl phosphate + formate + H(+). It functions in the pathway cofactor biosynthesis; riboflavin biosynthesis; 2-hydroxy-3-oxobutyl phosphate from D-ribulose 5-phosphate: step 1/1. In terms of biological role, catalyzes the conversion of D-ribulose 5-phosphate to formate and 3,4-dihydroxy-2-butanone 4-phosphate. This is 3,4-dihydroxy-2-butanone 4-phosphate synthase (RIB3) from Pyricularia oryzae (strain 70-15 / ATCC MYA-4617 / FGSC 8958) (Rice blast fungus).